Reading from the N-terminus, the 490-residue chain is Tegument protein VP16 (490 aa).

The tract at residues 11–35 is disordered; that stretch reads DADGVSPPPPRPAGGPKNTPAAPPL. A phosphoserine mark is found at Ser16, Ser351, Ser411, and Ser453. A transcriptional activation region spans residues 411-490; that stretch reads STTAPITDVS…DAMGIDDFGG (80 aa).

This sequence belongs to the herpesviridae tegument protein VP16 protein family. Interacts with VP22. Interacts with gH (via C-terminus). Interacts with the virion host shutoff protein (vhs). Interacts with VP11/12. Associates with the VP16-induced complex; binding to host HCFC1 activates VP16 for association with the octamer motif-binding host protein POU2F1, to form a multiprotein-DNA complex responsible for activating transcription of the viral immediate early genes.

The protein resides in the virion tegument. The protein localises to the host nucleus. Its function is as follows. Transcriptional activator of immediate-early (IE) gene products (alpha genes). Acts as a key activator of lytic infection by initiating the lytic program through the assembly of the transcriptional regulatory VP16-induced complex composed of VP16 and two cellular factors, HCFC1 and POU2F 1. VP16-induced complex represents a regulatory switch: when it is on, it promotes IE-gene expression and thus lytic infection, and when it is off, it limits IE-gene transcription favoring latent infection. In terms of biological role, may play a role in the aggregation of tegument proteins around nucleocapsids during virus morphogenesis. The polypeptide is Tegument protein VP16 (Human herpesvirus 2 (strain 333) (HHV-2)).